A 2850-amino-acid polypeptide reads, in one-letter code: MLRVRQLLLLLLFRGPLIDAGAWTGDVTDSDTEDNLQSSPEKGWCSTWGAGHFSTFDGHEYNFQGMCNYIFTATCGDDVPATFSIQLRRDMEGNISRIIMELGASVVTVNKETISVRDIGVVSLPYTSNGLQITPYGQSVQLVAKQLELELVITWGPDAHLTEGQGGDEVGTPGTLKQESKGSPAWAGSSLCIPTETNSTTPQVQVETKYMGKLCGLCGNFDGKIDNEFLSEDGKLLEAHKYATLQKLDDPNEICAHEAIPSTIILKTRYAQICNQLLTLVSPGCDVPKETLMLSCQADMAACARPGQPNCSCATLSEYSRRCSMTGQPVRNWRTPALCPMSQCPANQVYQECGEVCIKTCSNPQHSCSSPCTFGCFCPHGTLLDDISGNQSCVPVNQCPCMLNGMVYGPGEITKTACQTCQCTMGRWTCTKQPCPGHCSLEGGSFVTTFDARPYRFHGTCTYTLLQSPQLPNEGTLMAVYDKSGYSHSETSLVAIMYLSKKDKIVISEDEVITNNGDTKLLPYKTHNITIFRQTSTHLQMATTFGLELVFQMQPVFQVYITVGPQFKGQTRGLCGNFNGDTTDDFTTSMGIDEGTASLFVDSWRAGNCPAALEREMDPCSMSQLNKVCAETHCSMLLKKGSVFEKCHSVVNPQPFYKRCVYQACNYEETFPHICSALGAYAHACSARGILLWGWRNSVDNCTVPCTGNRTFSYDSQACDRTCLSLSDRETECHVSPVPVDGCNCPEGTYLNHKAECVHKAQCPCLLDDYKFVQADQSTMINGVICHCINGRLSCPRQAEMFFASCPEPKTFQSCSQSSEDKFGAACAPTCQMLATGIDCVPTKCESGCVCPKGLYENSDGQCVPAEECPCDYAGVSYPGGFELHTDCKTCTCSQGRWTCQLSTQCPSTCVLYGEGHIITFDGQRFVFDGDCEYMLATDDCGANSSQPTFKVLTENVICGKSGVTCSRAIKISLGGLFITMADSNYTVSGEEPLVHLKVKPSPLNLVLDIDIPGRLNLTLVWNKHMSVSIKIRRATQDALCGLCGNANGNMKDDFETRSKYVASNELEFVNSWKESPLCGDASYAVDPCSLNTFRRSWAERKCNIINSQTFAACHSKVYHLPYYEACVRDACGCDTGGDCECLCDAVAAYAKACLDKGVCVDWRTPDFCPIYCDFYNTHTLVGENEYQYAQESNCTWHYQPCLCPGSLGSFPDTNTEGCYNCSQNEYFDHSEGTCVPCAPPTTTLPPTTTGSQPTTETTISTEFHSSTSANTPVAPSYLPGLPTPPPSAPSSTEELTVWTTPKESTVSSGEYPQTTMAATPPTSPWPPTSIPKSTPTELPVTQATSKPTASSLSSSTKTTAELTESTTVTLLTLMPGMSTSQEGTPTSKIPVTQTTTHRVPSRCITNQSTTMFQTTTVQEAEITQTLAPSTYTTNDITKTQNLFSTAPHLSETSAVTAHQSTPTAVSANSIKPTMSSTGTPVVHTTSGTSSSPQTPRTTHPSTTVAVSGTVHTTGLPSGTSVHTTTNFPTHSGPQSSLSTHLPLFSTLSVTPTTEGLNTQSTPIPAITNSLMTTGGLTGTPPVHTTSGTTSSPQTPRTTHPFSTVAVSNTKHTTGVSLETSVQTTIASPTPSAPQTSLATHLPFSSTSSVTPTSEVIITPTPQHTLSSASTSTTTGNILPTTIGKTGSPHTSVPVIYTTSAITQTKTSFSTDRTSTSTSAPHLSETSAVTAHQSTPTAVSANSIKPTMSSTGTPVVHTTSGTTSSPQTPRTTHPSTTVAVSGTVHTTGLPSGTSVHTTTNFPTHSGPQSSLSTHLPLFSTLSVTPTTEGLNTPTSPHSLSVASTSMPLMTVLPTTLEGTRPPHTSVPVTYTTTAATQTKSSFSTDRTSAPHLSQPSTVTPTQSTPIPATTNSLMTTGGLTGTPPVHTTSGTTSSPQTPRTTHPFSTVAVSNTKHTTGVSLETSVQTTIASPTPSAPQTSLATHLPFSSTSSVTPTSEVIITPTPQHTLSSASTSTTTGNILPTTIGQTGSPHTSVPVIYTTSAITQTKTSFSTDRTSTSTSAPHLSETSAVTAHQSTPTAVSANSIKPTMSSTGTPVVHTTSGTTSSPQTPRTTHPSTTVAVSGTVHTTGLPSGTSVHTTTNFPTHSGPQSSLSTHLPLFSTLSVTPTTEGLNTPTSPHSLSAASTSMPLMTVLPTTLEGTRPPHTSVPVTYTTTAATQTKSSFSTDRTSTPHLSQSSTVTPTQPTPIPATTNSPMTTVGLTGTPVVHTPSGTSSIAHTPHTTHSLPTAASSSTTLSTAPQFRTSEQSTTTFPTPSAPQTSLVTSLPPFSTSSVSPTDEIHITSTNPHTVSSVSMSRPVSTILQTTIEVTTPPNTSTPVTHSTSATTEAQGSFSTERTSTSYLSHPSSTTVHQSTAGPVITSIKSTMGVTGTPPVHTTSGTTSSPQTPHSTHPISTAAISRTTGISGTPFRTPMKTTITFPTPSSLQTSMATLFPPFSTSVMSSTEIFNTPTNPHSVSSASTSRPLSTSLPTTIKGTGTPQTPVSDINTTSATTQAHSSFPTTRTSTSHLSLPSSMTSTLTPASRSASTLQYTPTPSSVSHSPLLTTPTASPPSSAPTFVSPTAASTVISSALPTIHMTPTPSSRPTSSTGLLSTSKTTSHVPTFSSFSSKSTTAHLTSLTTQAATSGLLSSTMGMTNLPSSGSPDINHTTRPPGSSPLPTSAFLSRSTSPTGSSSPSTPVSSSNPDSSVSSPPSHPGTCSLQEEEHQITYQGCVANVTLTRCQGFCASSVSFNKDTLQLESSCGCCQPLSTYKKQLSLPCPDPDAPGQQLTLTLQVFSSCVCSPLQCKN.

The N-terminal stretch at 1 to 22 is a signal peptide; that stretch reads MLRVRQLLLLLLFRGPLIDAGA. The VWFD 1 domain maps to 43 to 256; the sequence is GWCSTWGAGH…KLDDPNEICA (214 aa). 2 cysteine pairs are disulfide-bonded: cysteine 45-cysteine 218 and cysteine 67-cysteine 255. An N-linked (GlcNAc...) asparagine glycan is attached at asparagine 94. Positions 160–183 are disordered; the sequence is HLTEGQGGDEVGTPGTLKQESKGS. The N-linked (GlcNAc...) asparagine glycan is linked to asparagine 310. One can recognise a TIL 1 domain in the interval 344 to 399; sequence CPANQVYQECGEVCIKTCSNPQHSCSSPCTFGCFCPHGTLLDDISGNQSCVPVNQC. The 185-residue stretch at 437-621 folds into the VWFD 2 domain; the sequence is GHCSLEGGSF…ALEREMDPCS (185 aa). Intrachain disulfides connect cysteine 439-cysteine 575 and cysteine 461-cysteine 620. N-linked (GlcNAc...) asparagine glycans are attached at residues asparagine 528 and asparagine 701. Residues 806–869 form the TIL 2 domain; that stretch reads CPEPKTFQSC…DGQCVPAEEC (64 aa). Residues 908-1080 form the VWFD 3 domain; the sequence is STCVLYGEGH…NSWKESPLCG (173 aa). 4 disulfides stabilise this stretch: cysteine 910/cysteine 1044, cysteine 932/cysteine 1079, cysteine 941/cysteine 1041, and cysteine 959/cysteine 966. N-linked (GlcNAc...) asparagine glycosylation is found at asparagine 1017 and asparagine 1221. The segment covering 1263-1281 has biased composition (low complexity); the sequence is EFHSSTSANTPVAPSYLPG. 16 disordered regions span residues 1263–1363, 1377–1400, 1466–1504, 1580–1600, 1626–1650, 1705–1813, 1877–1942, 1968–1992, 2049–2119, 2219–2254, 2276–2295, 2306–2338, 2370–2473, 2511–2621, 2634–2674, and 2692–2761; these read EFHS…TAEL, GMST…THRV, VSAN…PSTT, TPPV…RTTH, IASP…TSSV, TKTS…SLST, QTKS…RTTH, TSFS…PSTT, QTKS…TTNS, IAHT…SSTT, EQST…SPTD, TTPP…FRTP, PTNP…TFVS, PTIH…KSTT, and STMG…GTCS. Over residues 1294–1312 the composition is skewed to polar residues; it reads EELTVWTTPKESTVSSGEY. The segment covering 1345-1363 has biased composition (low complexity); sequence TSKPTASSLSSSTKTTAEL. Polar residues-rich tracts occupy residues 1378–1399 and 1466–1484; these read MSTS…TTHR and VSAN…PVVH. 8 repeat units span residues 1440 to 1555, 1556 to 1712, 1713 to 1885, 1886 to 2054, 2055 to 2227, 2228 to 2396, 2397 to 2563, and 2564 to 2671. The approximate repeats stretch occupies residues 1440–2671; that stretch reads TQNLFSTAPH…VPTFSSFSSK (1232 aa). The segment covering 1485-1504 has biased composition (low complexity); sequence TTSGTSSSPQTPRTTHPSTT. The segment covering 1626–1639 has biased composition (polar residues); it reads IASPTPSAPQTSLA. A compositionally biased stretch (low complexity) spans 1705–1719; it reads TKTSFSTDRTSTSTS. The segment covering 1720 to 1757 has biased composition (polar residues); sequence APHLSETSAVTAHQSTPTAVSANSIKPTMSSTGTPVVH. Positions 1758-1777 are enriched in low complexity; sequence TTSGTTSSPQTPRTTHPSTT. Positions 1778 to 1813 are enriched in polar residues; that stretch reads VAVSGTVHTTGLPSGTSVHTTTNFPTHSGPQSSLST. The span at 1893 to 1942 shows a compositional bias: low complexity; that stretch reads SQPSTVTPTQSTPIPATTNSLMTTGGLTGTPPVHTTSGTTSSPQTPRTTH. Polar residues predominate over residues 1968–1981; the sequence is IASPTPSAPQTSLA. The span at 2049–2061 shows a compositional bias: low complexity; the sequence is TSFSTDRTSTSTS. Residues 2062 to 2099 are compositionally biased toward polar residues; the sequence is APHLSETSAVTAHQSTPTAVSANSIKPTMSSTGTPVVH. Residues 2100-2119 show a composition bias toward low complexity; the sequence is TTSGTTSSPQTPRTTHPSTT. Positions 2227 to 2238 are enriched in polar residues; sequence DRTSTPHLSQSS. Over residues 2282-2295 the composition is skewed to low complexity; the sequence is TTHSLPTAASSSTT. A compositionally biased stretch (low complexity) spans 2370 to 2384; the sequence is TTPPNTSTPVTHSTS. Residues 2385–2429 show a composition bias toward polar residues; that stretch reads ATTEAQGSFSTERTSTSYLSHPSSTTVHQSTAGPVITSIKSTMGV. Residues 2436–2456 show a composition bias toward low complexity; it reads HTTSGTTSSPQTPHSTHPIST. Over residues 2457–2466 the composition is skewed to polar residues; sequence AAISRTTGIS. The span at 2516–2533 shows a compositional bias: low complexity; the sequence is SVSSASTSRPLSTSLPTT. The span at 2534–2560 shows a compositional bias: polar residues; it reads IKGTGTPQTPVSDINTTSATTQAHSSF. The span at 2561–2584 shows a compositional bias: low complexity; sequence PTTRTSTSHLSLPSSMTSTLTPAS. The segment covering 2585 to 2601 has biased composition (polar residues); it reads RSASTLQYTPTPSSVSH. Positions 2639-2674 are enriched in low complexity; it reads TPTPSSRPTSSTGLLSTSKTTSHVPTFSSFSSKSTT. Positions 2692-2725 are enriched in polar residues; that stretch reads STMGMTNLPSSGSPDINHTTRPPGSSPLPTSAFL. Low complexity predominate over residues 2726-2759; it reads SRSTSPTGSSSPSTPVSSSNPDSSVSSPPSHPGT. Disulfide bonds link cysteine 2760–cysteine 2807, cysteine 2774–cysteine 2821, cysteine 2783–cysteine 2841, and cysteine 2787–cysteine 2843. One can recognise a CTCK domain in the interval 2760–2849; the sequence is CSLQEEEHQI…SCVCSPLQCK (90 aa).

Multimer; disulfide-linked. In terms of processing, O-glycosylated. In terms of tissue distribution, expressed in stomach, duodenum and small intestine.

It is found in the secreted. May provide a mechanism for modulation of the composition of the protective mucus layer related to acid secretion or the presence of bacteria and noxious agents in the lumen. Plays an important role in the cytoprotection of epithelial surfaces and are used as tumor markers in a variety of cancers. May play a role in epithelial organogenesis. The sequence is that of Mucin-6 (Muc6) from Mus musculus (Mouse).